A 284-amino-acid chain; its full sequence is Pantothenate synthetase (284 aa).

Position 30-37 (30-37 (MGNLHDGH)) interacts with ATP. His-37 (proton donor) is an active-site residue. Gln-61 is a binding site for (R)-pantoate. Beta-alanine is bound at residue Gln-61. 149-152 (GEKD) contacts ATP. A (R)-pantoate-binding site is contributed by Gln-155. ATP-binding positions include Val-178 and 186–189 (LSSR).

It belongs to the pantothenate synthetase family. As to quaternary structure, homodimer.

The protein resides in the cytoplasm. It catalyses the reaction (R)-pantoate + beta-alanine + ATP = (R)-pantothenate + AMP + diphosphate + H(+). It participates in cofactor biosynthesis; (R)-pantothenate biosynthesis; (R)-pantothenate from (R)-pantoate and beta-alanine: step 1/1. Catalyzes the condensation of pantoate with beta-alanine in an ATP-dependent reaction via a pantoyl-adenylate intermediate. The polypeptide is Pantothenate synthetase (Enterobacter sp. (strain 638)).